We begin with the raw amino-acid sequence, 291 residues long: Formamidopyrimidine-DNA glycosylase (291 aa).

The active-site Schiff-base intermediate with DNA is Pro-2. Glu-3 (proton donor) is an active-site residue. Lys-60 (proton donor; for beta-elimination activity) is an active-site residue. The DNA site is built by His-108 and Arg-127. An FPG-type zinc finger spans residues 257–291; it reads WVYRRGGQACRICSTPIRRESLCGRGTHWCPNCQR. The active-site Proton donor; for delta-elimination activity is Arg-281.

The protein belongs to the FPG family. In terms of assembly, monomer. The cofactor is Zn(2+).

It catalyses the reaction Hydrolysis of DNA containing ring-opened 7-methylguanine residues, releasing 2,6-diamino-4-hydroxy-5-(N-methyl)formamidopyrimidine.. It carries out the reaction 2'-deoxyribonucleotide-(2'-deoxyribose 5'-phosphate)-2'-deoxyribonucleotide-DNA = a 3'-end 2'-deoxyribonucleotide-(2,3-dehydro-2,3-deoxyribose 5'-phosphate)-DNA + a 5'-end 5'-phospho-2'-deoxyribonucleoside-DNA + H(+). Involved in base excision repair of DNA damaged by oxidation or by mutagenic agents. Acts as a DNA glycosylase that recognizes and removes damaged bases. Has a preference for oxidized purines, such as 7,8-dihydro-8-oxoguanine (8-oxoG). Has AP (apurinic/apyrimidinic) lyase activity and introduces nicks in the DNA strand. Cleaves the DNA backbone by beta-delta elimination to generate a single-strand break at the site of the removed base with both 3'- and 5'-phosphates. The protein is Formamidopyrimidine-DNA glycosylase of Prochlorococcus marinus (strain MIT 9313).